The following is a 131-amino-acid chain: MNIIQQLEQEQIAQLNKTIPDFEPGDTVVVNVKVKEGDRTRVQAYEGVCIARAGGGLNENFTVRKISYGEGVERVFPIYSPLIDSIKVVRRGKVRRAKLYYLRDRRGKAARIAERAERGSEKGKTTPAAAE.

Residues 111–124 (RIAERAERGSEKGK) are compositionally biased toward basic and acidic residues. The segment at 111–131 (RIAERAERGSEKGKTTPAAAE) is disordered.

Belongs to the bacterial ribosomal protein bL19 family.

This protein is located at the 30S-50S ribosomal subunit interface and may play a role in the structure and function of the aminoacyl-tRNA binding site. The protein is Large ribosomal subunit protein bL19 of Methylobacterium nodulans (strain LMG 21967 / CNCM I-2342 / ORS 2060).